The chain runs to 184 residues: Thiosulfate dehydrogenase [quinone] large subunit (184 aa).

Transmembrane regions (helical) follow at residues 21-38 (LFPV…GGLR), 86-106 (FLTV…IGLL), 109-129 (LAAL…WLGS), and 137-157 (IGAL…GRVW).

In terms of assembly, heterodimer of a large and a small subunit in a 2:2 stoichiometry. TQO may associate with the terminal oxidase formed by doxBCE.

Its subcellular location is the cell membrane. The catalysed reaction is 6-decylubiquinone + 2 thiosulfate = 6-decylubiquinol + tetrathionate. Inhibited by sulfite, metabisulfite and dithonite. In terms of biological role, TQO plays a role in sulfur oxidation and is proposed to couple sulfur oxidation to dioxygen reduction; caldariellaquinone or sulfolobus quinone seem to serve to transfer electrons to the electron transport chain terminal oxidase formed by DoxBCE. The protein is Thiosulfate dehydrogenase [quinone] large subunit (doxD) of Acidianus ambivalens (Desulfurolobus ambivalens).